Reading from the N-terminus, the 147-residue chain is Peptidyl-lysine N-acetyltransferase YjaB (147 aa).

In terms of domain architecture, N-acetyltransferase spans 3 to 144 (ISIRRSRHEE…KPYPLLNLAY (142 aa)).

The protein belongs to the acetyltransferase family.

It catalyses the reaction L-lysyl-[protein] + acetyl-CoA = N(6)-acetyl-L-lysyl-[protein] + CoA + H(+). N-epsilon-lysine acetyltransferase that catalyzes acetylation of a large number of proteins. Binds acetyl-CoA. The sequence is that of Peptidyl-lysine N-acetyltransferase YjaB (yjaB) from Escherichia coli (strain K12).